We begin with the raw amino-acid sequence, 209 residues long: Pyrrolidone-carboxylate peptidase (209 aa).

Residues E79, C142, and H164 contribute to the active site.

Belongs to the peptidase C15 family. As to quaternary structure, homotetramer.

It is found in the cytoplasm. The catalysed reaction is Release of an N-terminal pyroglutamyl group from a polypeptide, the second amino acid generally not being Pro.. In terms of biological role, removes 5-oxoproline from various penultimate amino acid residues except L-proline. The chain is Pyrrolidone-carboxylate peptidase from Saccharolobus islandicus (strain L.S.2.15 / Lassen #1) (Sulfolobus islandicus).